Here is a 329-residue protein sequence, read N- to C-terminus: Carbonic anhydrase (329 aa).

A chloroplast transit peptide-like region spans residues 1–108 (MSTASAFAIN…AAARIDQITA (108 aa)).

This sequence belongs to the beta-class carbonic anhydrase family. As to quaternary structure, homohexamer.

Its subcellular location is the cytoplasm. It carries out the reaction hydrogencarbonate + H(+) = CO2 + H2O. Its function is as follows. Reversible hydration of carbon dioxide. The polypeptide is Carbonic anhydrase (Flaveria pringlei).